The primary structure comprises 425 residues: UPF0597 protein VIBHAR_03081 (425 aa).

The protein belongs to the UPF0597 family.

In Vibrio campbellii (strain ATCC BAA-1116), this protein is UPF0597 protein VIBHAR_03081.